Reading from the N-terminus, the 228-residue chain is UPF0328 protein ECU07_0040 (228 aa).

Belongs to the UPF0328 family.

The protein is UPF0328 protein ECU07_0040 of Encephalitozoon cuniculi (strain GB-M1) (Microsporidian parasite).